Here is a 1403-residue protein sequence, read N- to C-terminus: Eukaryotic translation initiation factor 4 gamma (1403 aa).

3 stretches are compositionally biased toward polar residues: residues 1–11 (MSSKPPSNTPK), 19–39 (ASSQ…TATA), and 50–60 (EPTNTSRANAQ). Disordered regions lie at residues 1-381 (MSSK…GSTP), 439-464 (SRSG…RNGF), 488-774 (VVVP…KRDL), and 861-1003 (AFSD…EALL). At Ser-83 the chain carries Phosphoserine. The segment covering 109–137 (DNTSKPSANSSAERTSSQHQKPETSSQIG) has biased composition (polar residues). 2 stretches are compositionally biased toward low complexity: residues 190 to 208 (SGVS…SVTS) and 231 to 248 (PRPT…ANGA). Over residues 249 to 269 (PTNKPSTDINTTDPATQTTQV) the composition is skewed to polar residues. Residues 270 to 291 (SASNSPALSGSSTPSNTSSRSN) show a composition bias toward low complexity. Basic and acidic residues predominate over residues 298 to 308 (FSEKRHYDRYG). The span at 325–334 (NYNNSGNNRN) shows a compositional bias: low complexity. Composition is skewed to polar residues over residues 346–381 (RNYN…GSTP), 439–460 (SRSG…TLSP), and 493–508 (KNAS…SRAE). A phosphoserine mark is found at Ser-452, Ser-455, Ser-456, and Ser-459. Over residues 537 to 714 (IQEKAEAEAK…GKREADKNPE (178 aa)) the composition is skewed to basic and acidic residues. Polar residues predominate over residues 720–737 (PLASSEANVDTSKQTNAT). Residues 741–754 (VVDKTKVEKLKASE) are compositionally biased toward basic and acidic residues. The span at 757 to 768 (STSSLSSPSHST) shows a compositional bias: low complexity. A phosphoserine mark is found at Ser-866 and Ser-882. Residues 868 to 886 (RGMYSSSRQSSRSGSNTHS) are compositionally biased toward low complexity. Thr-884 carries the post-translational modification Phosphothreonine. 4 positions are modified to phosphoserine: Ser-886, Ser-911, Ser-919, and Ser-921. Tyr-923 bears the Phosphotyrosine mark. Residues 986-995 (KLTEKPAETK) are compositionally biased toward basic and acidic residues. Positions 1009-1245 (QRKVKGSLNK…MDVMDSRKNG (237 aa)) constitute an MIF4G domain. Positions 1266–1403 (AERKKALAES…QKDSNSKTSS (138 aa)) are disordered. Over residues 1284–1295 (HGRDMNRGDSRM) the composition is skewed to basic and acidic residues. Composition is skewed to polar residues over residues 1302 to 1313 (PPFSSSDWSNNK), 1328 to 1341 (SGTQ…SLSS), and 1348 to 1358 (VSRTPSRQNSA). Position 1333 is a phosphoserine (Ser-1333). Residues 1383-1403 (LEEHDHDNDGGQKDSNSKTSS) show a composition bias toward basic and acidic residues.

This sequence belongs to the eukaryotic initiation factor 4G family.

It is found in the cytoplasm. The protein resides in the perinuclear region. Functionally, component of the protein complex eIF4F, which is involved in the recognition of the mRNA cap, ATP-dependent unwinding of 5'-terminal secondary structure and recruitment of mRNA to the ribosome. This Schizosaccharomyces pombe (strain 972 / ATCC 24843) (Fission yeast) protein is Eukaryotic translation initiation factor 4 gamma (tif471).